Here is a 224-residue protein sequence, read N- to C-terminus: Response regulator protein GraR (224 aa).

The 114-residue stretch at Gln-2–Tyr-115 folds into the Response regulatory domain. Asp-51 is subject to 4-aspartylphosphate. The ompR/PhoB-type DNA-binding region spans Lys-126 to Glu-224. Phosphothreonine occurs at positions 128, 130, and 149.

Interacts with GraX. Phosphorylated by GraS. Phosphorylated by Stk1; phosphorylation increases the DNA-binding activity of GraR.

It is found in the cytoplasm. Its function is as follows. Member of the two-component regulatory system GraR/GraS involved in resistance against cationic antimicrobial peptides (CAMPs). Upon phosphorylation by GraS, functions as a transcription regulator by direct binding to promoter regions of target genes such as adhesins, exoproteins, transporters, toxins, and proteins involved in cell wall synthesis. Down-regulates the expression of many genes involved in RNA and amino acid synthesis or glycolysis. The polypeptide is Response regulator protein GraR (graR) (Staphylococcus aureus (strain MRSA252)).